A 597-amino-acid polypeptide reads, in one-letter code: Elongation factor 4 (597 aa).

Residues 4-181 (SKIRNFSIIA…EIVDKISYPI (178 aa)) enclose the tr-type G domain. Residues 16–21 (DHGKST) and 128–131 (NKID) contribute to the GTP site.

This sequence belongs to the TRAFAC class translation factor GTPase superfamily. Classic translation factor GTPase family. LepA subfamily.

The protein resides in the cell membrane. The catalysed reaction is GTP + H2O = GDP + phosphate + H(+). Functionally, required for accurate and efficient protein synthesis under certain stress conditions. May act as a fidelity factor of the translation reaction, by catalyzing a one-codon backward translocation of tRNAs on improperly translocated ribosomes. Back-translocation proceeds from a post-translocation (POST) complex to a pre-translocation (PRE) complex, thus giving elongation factor G a second chance to translocate the tRNAs correctly. Binds to ribosomes in a GTP-dependent manner. The sequence is that of Elongation factor 4 from Mycoplasmopsis pulmonis (strain UAB CTIP) (Mycoplasma pulmonis).